The sequence spans 2188 residues: Genome polyprotein (2188 aa).

Residue Gly2 is the site of N-myristoyl glycine; by host attachment. Residues 2-1503 (GAQVTRQQTG…HISRAFITLQ (1502 aa)) are Cytoplasmic-facing. Residues Asp408, Arg412, Pro548, Asp549, Ile550, Arg834, Pro838, and Asn839 each contribute to the N-acetylneuraminate site. Residues His879 and Asp897 each act as for protease 2A activity in the active site. Zn(2+) contacts are provided by Cys914 and Cys916. Cys968 (for protease 2A activity) is an active-site residue. The Zn(2+) site is built by Cys974 and His976. A membrane-binding region spans residues 1108–1180 (SESWLKKFTE…EHSCPTTERQ (73 aa)). Residues 1108–1246 (SESWLKKFTE…SPGTGKSVAS (139 aa)) form an oligomerization region. The tract at residues 1129–1133 (SQKID) is RNA-binding. The SF3 helicase domain occupies 1212–1370 (EKKINNYIQF…YKDSNKLDMS (159 aa)). Residue 1236 to 1243 (GSPGTGKS) coordinates ATP. Zn(2+) is bound by residues Cys1376, Cys1389, and Cys1394. The C4-type; degenerate zinc finger occupies 1376–1394 (CKPDNCTPTNYKRCCPLIC). The interval 1421 to 1428 (EYRTRNST) is RNA-binding. An oligomerization region spans residues 1432–1437 (LEALFQ). Residues 1504 to 1519 (AIATFVSIAGVVYVIY) lie within the membrane without spanning it. At 1520-2188 (KLFAGIQGPY…SLRRKWLDSF (669 aa)) the chain is on the cytoplasmic side. Tyr1529 bears the O-(5'-phospho-RNA)-tyrosine mark. Positions 1549 to 1727 (GPGFDFAQAI…FAAMLLHSYF (179 aa)) constitute a Peptidase C3 domain. Catalysis depends on for protease 3C activity residues His1588, Glu1619, and Cys1695. A RdRp catalytic domain is found at 1954 to 2069 (GEIFAFDYTG…SYPHKIDPGL (116 aa)). Residues Asp1960 and Asp2055 each coordinate Mg(2+).

This sequence belongs to the picornaviruses polyprotein family. In terms of assembly, interacts with capsid protein VP1 and capsid protein VP3 to form heterotrimeric protomers. Interacts with capsid protein VP0, and capsid protein VP3 to form heterotrimeric protomers. Five protomers subsequently associate to form pentamers which serve as building blocks for the capsid. Interacts with capsid protein VP2, capsid protein VP3 and capsid protein VP4 following cleavage of capsid protein VP0. As to quaternary structure, interacts with capsid protein VP1 and capsid protein VP3 in the mature capsid. In terms of assembly, interacts with capsid protein VP0 and capsid protein VP1 to form heterotrimeric protomers. Five protomers subsequently associate to form pentamers which serve as building blocks for the capsid. Interacts with capsid protein VP4 in the mature capsid. Interacts with protein 2C; this interaction may be important for virion morphogenesis. Interacts with host IRF7. Interacts with capsid protein VP1 and capsid protein VP3. As to quaternary structure, homodimer. In terms of assembly, homohexamer; forms a hexameric ring structure with 6-fold symmetry characteristic of AAA+ ATPases. Interacts (via N-terminus) with host RTN3 (via reticulon domain); this interaction is important for viral replication. Interacts with capsid protein VP3; this interaction may be important for virion morphogenesis. Interacts with protein 3CD. As to quaternary structure, homodimer. Interacts with host GBF1. Interacts (via GOLD domain) with host ACBD3 (via GOLD domain); this interaction allows the formation of a viral protein 3A/ACBD3 heterotetramer with a 2:2 stoichiometry, which will stimulate the recruitment of host PI4KB in order to synthesize PI4P at the viral RNA replication sites. In terms of assembly, interacts with RNA-directed RNA polymerase. Interacts with host IFIH1/MDA5; this interaction inhibits host IFIH1. As to quaternary structure, interacts with protein 3AB and with RNA-directed RNA polymerase. In terms of assembly, interacts with Viral protein genome-linked and with protein 3CD. Mg(2+) is required as a cofactor. Post-translationally, specific enzymatic cleavages in vivo by the viral proteases yield processing intermediates and the mature proteins. Myristoylation is required for the formation of pentamers during virus assembly. Further assembly of 12 pentamers and a molecule of genomic RNA generates the provirion. In terms of processing, during virion maturation, immature virions are rendered infectious following cleavage of VP0 into VP4 and VP2. This maturation seems to be an autocatalytic event triggered by the presence of RNA in the capsid and it is followed by a conformational change infectious virion. Post-translationally, myristoylation is required during RNA encapsidation and formation of the mature virus particle. VPg is uridylylated by the polymerase into VPg-pUpU. This acts as a nucleotide-peptide primer for the genomic RNA replication.

It localises to the virion. Its subcellular location is the host cytoplasm. The protein localises to the host cytoplasmic vesicle membrane. It is found in the host nucleus. The catalysed reaction is a ribonucleoside 5'-triphosphate + H2O = a ribonucleoside 5'-diphosphate + phosphate + H(+). It catalyses the reaction Selective cleavage of Tyr-|-Gly bond in the picornavirus polyprotein.. It carries out the reaction RNA(n) + a ribonucleoside 5'-triphosphate = RNA(n+1) + diphosphate. The enzyme catalyses Selective cleavage of Gln-|-Gly bond in the poliovirus polyprotein. In other picornavirus reactions Glu may be substituted for Gln, and Ser or Thr for Gly.. Component of immature procapsids, which is cleaved into capsid proteins VP4 and VP2 after maturation. Allows the capsid to remain inactive before the maturation step. Its function is as follows. Forms an icosahedral capsid of pseudo T=3 symmetry with capsid proteins VP2 and VP3. The capsid is 300 Angstroms in diameter, composed of 60 copies of each capsid protein and enclosing the viral positive strand RNA genome. Capsid protein VP1 mainly forms the vertices of the capsid. Capsid protein VP1, together with VP3, interacts with host cell sialic acids to provide virion attachment to target host cells. This attachment induces virion internalization. After binding to its receptor, the capsid undergoes conformational changes. Capsid protein VP1 N-terminus (that contains an amphipathic alpha-helix) and capsid protein VP4 are externalized. Together, they shape a pore in the host membrane through which viral genome is translocated to host cell cytoplasm. In terms of biological role, forms an icosahedral capsid of pseudo T=3 symmetry with capsid proteins VP2 and VP3. The capsid is 300 Angstroms in diameter, composed of 60 copies of each capsid protein and enclosing the viral positive strand RNA genome. Functionally, forms an icosahedral capsid of pseudo T=3 symmetry with capsid proteins VP2 and VP3. The capsid is 300 Angstroms in diameter, composed of 60 copies of each capsid protein and enclosing the viral positive strand RNA genome. Capsid protein VP3, together with VP1, interacts with host cell sialic acids to provide virion attachment to target host cells. In addition, inhibits the phosphorylation and nuclear translocation of host IRF7 and thereby suppresses downstream interferon production. Lies on the inner surface of the capsid shell. After binding to the host receptor, the capsid undergoes conformational changes. Capsid protein VP4 is released, Capsid protein VP1 N-terminus is externalized, and together, they shape a pore in the host membrane through which the viral genome is translocated into the host cell cytoplasm. Its function is as follows. Cysteine protease that cleaves viral polyprotein and specific host proteins. It is responsible for the autocatalytic cleavage between the P1 and P2 regions, which is the first cleavage occurring in the polyprotein. Also cleaves the host translation initiation factor EIF4G1, in order to shut down the capped cellular mRNA translation. Inhibits the host nucleus-cytoplasm protein and RNA trafficking by cleaving host members of the nuclear pores. Counteracts stress granule formation probably by antagonizing its assembly or promoting its dissassembly. Also plays a role in the suppression of host innate immunity through cleavage of host TRAF3, a component of the signaling cascade required to produce type I interferons. In terms of biological role, plays an essential role in the virus replication cycle by acting as a viroporin. Creates a pore in the host endoplasmic reticulum and as a consequence releases Ca2+ in the cytoplasm of infected cell. In turn, high levels of cytoplasmic calcium may trigger membrane trafficking and transport of viral ER-associated proteins to viroplasms, sites of viral genome replication. Functionally, induces and associates with structural rearrangements of intracellular membranes. Displays RNA-binding, nucleotide binding and NTPase activities. May play a role in virion morphogenesis and viral RNA encapsidation by interacting with the capsid protein VP3. Localizes the viral replication complex to the surface of membranous vesicles. Together with protein 3CD binds the Cis-Active RNA Element (CRE) which is involved in RNA synthesis initiation. Acts as a cofactor to stimulate the activity of 3D polymerase, maybe through a nucleid acid chaperone activity. Its function is as follows. Localizes the viral replication complex to the surface of membranous vesicles. It inhibits host cell endoplasmic reticulum-to-Golgi apparatus transport and causes the disassembly of the Golgi complex, possibly through GBF1 interaction. This would result in depletion of MHC, trail receptors and IFN receptors at the host cell surface. Plays an essential role in viral RNA replication by recruiting ACBD3 and PI4KB at the viral replication sites, thereby allowing the formation of the rearranged membranous structures where viral replication takes place. In terms of biological role, acts as a primer for viral RNA replication and remains covalently bound to viral genomic RNA. VPg is uridylylated prior to priming replication into VPg-pUpU. The oriI viral genomic sequence may act as a template for this. The VPg-pUpU is then used as primer on the genomic RNA poly(A) by the RNA-dependent RNA polymerase to replicate the viral genome. During genome replication, the VPg-RNA linkage is removed by the host TDP2, thereby accelerating replication. During the late stage of the replication cycle, host TDP2 is excluded from sites of viral RNA synthesis and encapsidation, allowing for the generation of progeny virions. Functionally, involved in the viral replication complex and viral polypeptide maturation. It exhibits protease activity with a specificity and catalytic efficiency that is different from protease 3C. Protein 3CD lacks polymerase activity. Protein 3CD binds to the 5'UTR of the viral genome. Major viral protease that mediates proteolytic processing of the polyprotein. Cleaves host EIF5B, contributing to host translation shutoff. Also cleaves host PABPC1, contributing to host translation shutoff. Binds and inhibits host IFIH1/MDA5, thereby inhibiting the type-I IFN production and the establishment of the antiviral state. Cleaves host MAP3K7/TAK1, resulting in inhibition of TRAF6-triggered NF-kappa-B induction. Cleaves host TICAM1; this interaction allows the virus to disrupt host TLR3 signaling. Cleaves host IRF7, resulting in inhibition of type-I IFN production. Cleaves host NLRP1, triggers host N-glycine-mediated degradation of the autoinhibitory NLRP1 N-terminal fragment. Its function is as follows. Replicates the viral genomic RNA on the surface of intracellular membranes. May form linear arrays of subunits that propagate along a strong head-to-tail interaction called interface-I. Covalently attaches UMP to a tyrosine of VPg, which is used to prime RNA synthesis. The positive stranded RNA genome is first replicated at virus induced membranous vesicles, creating a dsRNA genomic replication form. This dsRNA is then used as template to synthesize positive stranded RNA genomes. ss(+)RNA genomes are either translated, replicated or encapsidated. This is Genome polyprotein from Human enterovirus D68 (EV68).